A 193-amino-acid chain; its full sequence is Ion-translocating oxidoreductase complex subunit A (193 aa).

The next 6 helical transmembrane spans lie at 5-25, 47-67, 72-92, 102-122, 134-154, and 167-187; these read ILFF…FLGL, FVIL…LLPL, LRII…EIVL, LLGI…IPLF, IFYG…FSCI, and FQGA…FMGF.

The protein belongs to the NqrDE/RnfAE family. The complex is composed of six subunits: RnfA, RnfB, RnfC, RnfD, RnfE and RnfG.

It is found in the cell inner membrane. Functionally, part of a membrane-bound complex that couples electron transfer with translocation of ions across the membrane. The chain is Ion-translocating oxidoreductase complex subunit A from Buchnera aphidicola subsp. Acyrthosiphon pisum (strain APS) (Acyrthosiphon pisum symbiotic bacterium).